The chain runs to 868 residues: Alanine--tRNA ligase (868 aa).

Residues His-555, His-559, Cys-657, and His-661 each contribute to the Zn(2+) site. The interval Ser-828 to Glu-847 is disordered.

Belongs to the class-II aminoacyl-tRNA synthetase family. Zn(2+) serves as cofactor.

Its subcellular location is the cytoplasm. The enzyme catalyses tRNA(Ala) + L-alanine + ATP = L-alanyl-tRNA(Ala) + AMP + diphosphate. In terms of biological role, catalyzes the attachment of alanine to tRNA(Ala) in a two-step reaction: alanine is first activated by ATP to form Ala-AMP and then transferred to the acceptor end of tRNA(Ala). Also edits incorrectly charged Ser-tRNA(Ala) and Gly-tRNA(Ala) via its editing domain. The polypeptide is Alanine--tRNA ligase (Pseudoalteromonas translucida (strain TAC 125)).